The primary structure comprises 402 residues: Zinc finger protein 586 (402 aa).

Positions 15–87 (VTFEDVAVNF…DQGGHSGERP (73 aa)) constitute a KRAB domain. The segment at 88-116 (YECGEYRKLFKNKSCLTEPRRDHKHRNVR) adopts a C2H2-type 1; degenerate zinc-finger fold. The C2H2-type 2; degenerate zinc finger occupies 122-144 (YECSKYGKLFHQKPTLHIHERFH). The C2H2-type 3; degenerate zinc-finger motif lies at 150–172 (YECSECGKSFHQSSSLLQRQTLH). 8 C2H2-type zinc fingers span residues 178-200 (YECIECGKAFAEKSSLINHRKVH), 206-228 (YECNECGKSFAYTSSLIKHRRIH), 234-256 (YECSECGRSFAENSSLIKHLRVH), 262-284 (YECVECGKSFRRSSSLLQHQRVH), 290-312 (YECSECGKSFSLRSNLIHHQRVH), 317-339 (HECGQCGKSFSRKSSLIIHLRVH), 345-367 (YECSDCGKSFAENSSLIKHLRVH), and 373-395 (YECIDCGKSFRHSSSFRRHQRVH).

It belongs to the krueppel C2H2-type zinc-finger protein family.

The protein resides in the nucleus. Its function is as follows. May be involved in transcriptional regulation. The chain is Zinc finger protein 586 (ZNF586) from Homo sapiens (Human).